The following is a 400-amino-acid chain: Argininosuccinate synthase (400 aa).

ATP contacts are provided by residues 10 to 18 (AYSGGVDTS) and Ala-38. Position 89 (Tyr-89) interacts with L-citrulline. An ATP-binding site is contributed by Gly-119. Residues Thr-121, Asn-125, and Asp-126 each contribute to the L-aspartate site. Asn-125 contacts L-citrulline. Residues Arg-129, Ser-177, Ser-186, Glu-262, and Tyr-274 each contribute to the L-citrulline site.

Belongs to the argininosuccinate synthase family. Type 1 subfamily. As to quaternary structure, homotetramer.

The protein localises to the cytoplasm. The catalysed reaction is L-citrulline + L-aspartate + ATP = 2-(N(omega)-L-arginino)succinate + AMP + diphosphate + H(+). The protein operates within amino-acid biosynthesis; L-arginine biosynthesis; L-arginine from L-ornithine and carbamoyl phosphate: step 2/3. The polypeptide is Argininosuccinate synthase (Crocosphaera subtropica (strain ATCC 51142 / BH68) (Cyanothece sp. (strain ATCC 51142))).